Here is a 70-residue protein sequence, read N- to C-terminus: DNA-directed RNA polymerase subunit omega (70 aa).

The protein belongs to the RNA polymerase subunit omega family. In terms of assembly, the RNAP catalytic core consists of 2 alpha, 1 beta, 1 beta' and 1 omega subunit. When a sigma factor is associated with the core the holoenzyme is formed, which can initiate transcription.

It catalyses the reaction RNA(n) + a ribonucleoside 5'-triphosphate = RNA(n+1) + diphosphate. Promotes RNA polymerase assembly. Latches the N- and C-terminal regions of the beta' subunit thereby facilitating its interaction with the beta and alpha subunits. This is DNA-directed RNA polymerase subunit omega from Marinobacter nauticus (strain ATCC 700491 / DSM 11845 / VT8) (Marinobacter aquaeolei).